We begin with the raw amino-acid sequence, 335 residues long: Erlin-2 (335 aa).

Residues 1-2 (MS) are Cytoplasmic-facing. The chain crosses the membrane as a helical span at residues 3–23 (HAGAIAAIGVALIAAALFSAI). The Lumenal segment spans residues 24 to 335 (HKIEEGHVGV…ALNEPAVGDE (312 aa)). A glycan (N-linked (GlcNAc...) asparagine) is linked at Asn-106. Residues 310 to 321 (AGPSVQSATLLQ) show a composition bias toward polar residues. Positions 310-335 (AGPSVQSATLLQDDSPALNEPAVGDE) are disordered.

Belongs to the band 7/mec-2 family.

The protein resides in the endoplasmic reticulum membrane. Its function is as follows. Mediates the endoplasmic reticulum-associated degradation (ERAD) of inositol 1,4,5-trisphosphate receptors (IP3Rs). Promotes sterol-accelerated ERAD of HMGCR. Involved in regulation of cellular cholesterol homeostasis by regulation the SREBP signaling pathway. The protein is Erlin-2 (erlin2) of Xenopus tropicalis (Western clawed frog).